The primary structure comprises 208 residues: Uracil phosphoribosyltransferase (208 aa).

5-phospho-alpha-D-ribose 1-diphosphate-binding positions include R78, R103, and 130 to 138 (DPMLATGGS). Uracil is bound by residues I193 and 198-200 (GDA). D199 provides a ligand contact to 5-phospho-alpha-D-ribose 1-diphosphate.

Belongs to the UPRTase family. Mg(2+) is required as a cofactor.

The enzyme catalyses UMP + diphosphate = 5-phospho-alpha-D-ribose 1-diphosphate + uracil. It participates in pyrimidine metabolism; UMP biosynthesis via salvage pathway; UMP from uracil: step 1/1. With respect to regulation, allosterically activated by GTP. Its function is as follows. Catalyzes the conversion of uracil and 5-phospho-alpha-D-ribose 1-diphosphate (PRPP) to UMP and diphosphate. This is Uracil phosphoribosyltransferase from Klebsiella pneumoniae subsp. pneumoniae (strain ATCC 700721 / MGH 78578).